Here is a 312-residue protein sequence, read N- to C-terminus: Olfactory receptor-like protein COR4 (312 aa).

Residues 1 to 26 are Extracellular-facing; sequence MASGNCTTPTTFILSGLTDNPGLQMP. N-linked (GlcNAc...) asparagine glycosylation is present at Asn5. Residues 27–49 form a helical membrane-spanning segment; that stretch reads LFMVFLAIYTITLLTNLGLIALI. The Cytoplasmic segment spans residues 50–57; that stretch reads SVDLHLQT. Residues 58-79 traverse the membrane as a helical segment; the sequence is PMYIFLQNLSFTDAAYSTVITP. The Extracellular segment spans residues 80–100; the sequence is KMLATFLEERKTISYIGCILQ. A disulfide bond links Cys97 and Cys179. A helical transmembrane segment spans residues 101–120; it reads YFSFVLLTVTESLLLAVMAY. Residues 121–139 lie on the Cytoplasmic side of the membrane; it reads DRYVAICKPLLYPSIMTKA. A helical transmembrane segment spans residues 140 to 164; that stretch reads VCWRLVKGLYSLAFLNSLVHTSGLL. Residues 165 to 205 are Extracellular-facing; that stretch reads KLSFCSSNVVNHFFCDNSPLFQISSSSTTLNELLVFIFGSL. A helical transmembrane segment spans residues 206-226; it reads FAMSSIITILISYVFIILTVV. The Cytoplasmic segment spans residues 227-239; it reads RIRSKDGKYKAFS. A helical membrane pass occupies residues 240-260; the sequence is TCTSHLMAVSLFHGTVIFMYL. Residues 261–271 lie on the Extracellular side of the membrane; that stretch reads RPVKLFSLDTD. The helical transmembrane segment at 272-292 threads the bilayer; sequence KIASLFYTVVIPMLNPLIYSW. At 293–312 the chain is on the cytoplasmic side; sequence RNKEVKDALRRVIATNVWIH.

This sequence belongs to the G-protein coupled receptor 1 family.

It is found in the cell membrane. In terms of biological role, odorant receptor. This chain is Olfactory receptor-like protein COR4 (COR4), found in Gallus gallus (Chicken).